Here is a 141-residue protein sequence, read N- to C-terminus: MLGAEETALVRGVWQKVESAKDEMGEETLTRMFLVYPKTKTYFPHFDLHHGSEQIRNHGKKVVTALGNAIQNLDNLRQTLADLSNLHAYNLRVDPVNFKLLAQCFQVVLAVHLGQEYTPEVHVAFDKFLTAVAAVLAEKYR.

Residues 1-141 form the Globin domain; sequence MLGAEETALV…VAAVLAEKYR (141 aa). Heme b-binding residues include His-58 and His-87.

The protein belongs to the globin family. Heterotetramer of two alpha-D chains and two beta chains. As to expression, red blood cells.

In terms of biological role, involved in oxygen transport from the lung to the various peripheral tissues. The protein is Hemoglobin subunit alpha-D (HBAD) of Phalacrocorax carbo (Great cormorant).